We begin with the raw amino-acid sequence, 449 residues long: Neurexin-1a-beta (449 aa).

A signal peptide spans 1–38; that stretch reads MLRLWPGGAPGGLASILLRISLRLALWLPPLTLGSALA. Topologically, residues 39–373 are extracellular; sequence EGPGELYVPQ…EVIRESSSTT (335 aa). Positions 71 to 272 constitute a Laminin G-like domain; sequence TTYIFGRDGG…DPNVRVEGSA (202 aa). A disordered region spans residues 276 to 366; sequence GDMPSSSITP…AKGYPSPEVI (91 aa). Over residues 280–311 the composition is skewed to low complexity; that stretch reads SSSITPQSSVSAAGNRSETSPSITDITTTTAS. Residues 312–322 show a composition bias toward polar residues; sequence NRQGKQTTTPQ. The helical transmembrane segment at 374-394 threads the bilayer; sequence GMVVGIVAAAALCILILLYAM. At 395-449 the chain is on the cytoplasmic side; the sequence is YKYRNRDEGSYHVDESRNYISNSATQPNGAAVKEKPIGVPKNKKDKKNKDKEYYV. A disordered region spans residues 415 to 449; the sequence is SNSATQPNGAAVKEKPIGVPKNKKDKKNKDKEYYV.

The protein belongs to the neurexin family.

It is found in the membrane. Its function is as follows. Neuronal cell surface protein that may be involved in cell recognition and cell adhesion. May play a role in formation or maintenance of synaptic junctions. The sequence is that of Neurexin-1a-beta (nrxn1a) from Danio rerio (Zebrafish).